A 245-amino-acid chain; its full sequence is Uridylate kinase (245 aa).

12–15 provides a ligand contact to ATP; the sequence is KLSG. Residues 20 to 25 form an involved in allosteric activation by GTP region; sequence GEKGVG. G54 provides a ligand contact to UMP. ATP-binding residues include G55 and R59. Residues D74 and 135-142 each bind UMP; that span reads VGSPYFST. ATP contacts are provided by N163, Y169, and D172.

The protein belongs to the UMP kinase family. In terms of assembly, homohexamer.

It localises to the cytoplasm. It catalyses the reaction UMP + ATP = UDP + ADP. It functions in the pathway pyrimidine metabolism; CTP biosynthesis via de novo pathway; UDP from UMP (UMPK route): step 1/1. Its activity is regulated as follows. Allosterically activated by GTP. Inhibited by UTP. In terms of biological role, catalyzes the reversible phosphorylation of UMP to UDP. This chain is Uridylate kinase, found in Streptococcus mutans serotype c (strain ATCC 700610 / UA159).